The primary structure comprises 210 residues: BAG family molecular chaperone regulator 2 (210 aa).

Ala-2 is modified (N-acetylalanine). 3 positions are modified to phosphoserine: Ser-20, Ser-31, and Ser-73. The stretch at 20–60 (SMADRSSRLLESLDQLELRVEALRDAATAVEQEKEILLEMI) forms a coiled coil. The region spanning 109 to 189 (SLKHATRIID…NIDNSDKAIK (81 aa)) is the BAG domain.

Binds to the ATPase domain of HSP/HSC70 chaperones. May interact with NWD1. Interacts with HSPA1A (via NBD), HSPA1B (via NBD) and HSPA8. May interact with DNJC9; the interaction seems to be histone-dependent.

Functionally, co-chaperone for HSP70 and HSC70 chaperone proteins. Acts as a nucleotide-exchange factor (NEF) promoting the release of ADP from the HSP70 and HSC70 proteins thereby triggering client/substrate protein release. In Mus musculus (Mouse), this protein is BAG family molecular chaperone regulator 2 (Bag2).